A 765-amino-acid polypeptide reads, in one-letter code: Periplasmic beta-glucosidase (765 aa).

Residues 1-20 form the signal peptide; it reads MKWLCSVGIAVSLALQPALA. Asp-287 is an active-site residue.

This sequence belongs to the glycosyl hydrolase 3 family.

The protein resides in the periplasm. The catalysed reaction is Hydrolysis of terminal, non-reducing beta-D-glucosyl residues with release of beta-D-glucose.. The protein is Periplasmic beta-glucosidase (bglX) of Escherichia coli (strain K12).